A 249-amino-acid polypeptide reads, in one-letter code: 2,3-bisphosphoglycerate-dependent phosphoglycerate mutase (249 aa).

Residues Arg-11–Asn-18, Thr-24–Gly-25, Arg-63, Glu-90–Tyr-93, Lys-101, and Arg-117–Arg-118 contribute to the substrate site. His-12 (tele-phosphohistidine intermediate) is an active-site residue. Catalysis depends on Glu-90, which acts as the Proton donor/acceptor. Positions Ser-119 to Asp-138 are disordered. Residue Gly-184–Asn-185 participates in substrate binding.

It belongs to the phosphoglycerate mutase family. BPG-dependent PGAM subfamily.

It catalyses the reaction (2R)-2-phosphoglycerate = (2R)-3-phosphoglycerate. It participates in carbohydrate degradation; glycolysis; pyruvate from D-glyceraldehyde 3-phosphate: step 3/5. Functionally, catalyzes the interconversion of 2-phosphoglycerate and 3-phosphoglycerate. This chain is 2,3-bisphosphoglycerate-dependent phosphoglycerate mutase, found in Mycolicibacterium paratuberculosis (strain ATCC BAA-968 / K-10) (Mycobacterium paratuberculosis).